Here is a 454-residue protein sequence, read N- to C-terminus: uncharacterized protein (454 aa).

This is an uncharacterized protein from Rickettsia prowazekii (strain Madrid E).